The following is a 297-amino-acid chain: tRNA dimethylallyltransferase (297 aa).

Residue 15–22 coordinates ATP; it reads GPTASGKS. Substrate is bound at residue 17–22; that stretch reads TASGKS. Interaction with substrate tRNA regions lie at residues 40-43 and 164-168; these read DSMQ and QRIVR.

It belongs to the IPP transferase family. In terms of assembly, monomer. Mg(2+) is required as a cofactor.

It carries out the reaction adenosine(37) in tRNA + dimethylallyl diphosphate = N(6)-dimethylallyladenosine(37) in tRNA + diphosphate. Its function is as follows. Catalyzes the transfer of a dimethylallyl group onto the adenine at position 37 in tRNAs that read codons beginning with uridine, leading to the formation of N6-(dimethylallyl)adenosine (i(6)A). The sequence is that of tRNA dimethylallyltransferase from Rhizobium johnstonii (strain DSM 114642 / LMG 32736 / 3841) (Rhizobium leguminosarum bv. viciae).